A 409-amino-acid polypeptide reads, in one-letter code: S-adenosylmethionine synthase (409 aa).

An ATP-binding site is contributed by His15. Asp17 is a Mg(2+) binding site. Position 43 (Glu43) interacts with K(+). L-methionine contacts are provided by Glu56 and Gln100. Residues 100-110 form a flexible loop region; the sequence is QSSDIAQGVNE. Residues 171 to 173, 248 to 249, Asp257, 263 to 264, Ala280, and Lys284 each bind ATP; these read DGK, KF, and RK. Asp257 provides a ligand contact to L-methionine. Lys288 lines the L-methionine pocket.

This sequence belongs to the AdoMet synthase family. As to quaternary structure, homotetramer; dimer of dimers. Requires Mg(2+) as cofactor. It depends on K(+) as a cofactor.

The protein resides in the cytoplasm. It carries out the reaction L-methionine + ATP + H2O = S-adenosyl-L-methionine + phosphate + diphosphate. It functions in the pathway amino-acid biosynthesis; S-adenosyl-L-methionine biosynthesis; S-adenosyl-L-methionine from L-methionine: step 1/1. In terms of biological role, catalyzes the formation of S-adenosylmethionine (AdoMet) from methionine and ATP. The overall synthetic reaction is composed of two sequential steps, AdoMet formation and the subsequent tripolyphosphate hydrolysis which occurs prior to release of AdoMet from the enzyme. The polypeptide is S-adenosylmethionine synthase (Prochlorococcus marinus (strain NATL1A)).